A 27-amino-acid polypeptide reads, in one-letter code: Flagellar filament 34 kDa core protein (27 aa).

This sequence belongs to the bacterial flagellin family. As to quaternary structure, the flagellum consists of an outer layer composed of repeating units of FlaA around a core that contains one or all of five antigenically related polypeptides.

The protein localises to the periplasmic flagellum. It localises to the periplasm. Its function is as follows. Component of the core of the flagella. The protein is Flagellar filament 34 kDa core protein of Spirochaeta aurantia.